Consider the following 87-residue polypeptide: Large ribosomal subunit protein bL27 (87 aa).

The interval 1 to 22 is disordered; sequence MAHKKGQGSVKNGRDSRSKRLG.

Belongs to the bacterial ribosomal protein bL27 family.

The sequence is that of Large ribosomal subunit protein bL27 from Akkermansia muciniphila (strain ATCC BAA-835 / DSM 22959 / JCM 33894 / BCRC 81048 / CCUG 64013 / CIP 107961 / Muc).